A 144-amino-acid polypeptide reads, in one-letter code: Ribosome association toxin RatA (144 aa).

This sequence belongs to the ribosome association toxin RatA family.

In terms of biological role, toxic component of a type II toxin-antitoxin (TA) system. Binds to 50S ribosomal subunits, preventing them from associating with 30S subunits to form 70S ribosomes. Its antitoxin is unknown. The polypeptide is Ribosome association toxin RatA (ratA) (Pseudomonas aeruginosa (strain ATCC 15692 / DSM 22644 / CIP 104116 / JCM 14847 / LMG 12228 / 1C / PRS 101 / PAO1)).